Consider the following 517-residue polypeptide: Bifunctional purine biosynthesis protein PurH (517 aa).

Residues 1–146 (MGRLVLLSVS…KNFAHLTVLC (146 aa)) enclose the MGS-like domain.

It belongs to the PurH family.

The catalysed reaction is (6R)-10-formyltetrahydrofolate + 5-amino-1-(5-phospho-beta-D-ribosyl)imidazole-4-carboxamide = 5-formamido-1-(5-phospho-D-ribosyl)imidazole-4-carboxamide + (6S)-5,6,7,8-tetrahydrofolate. The enzyme catalyses IMP + H2O = 5-formamido-1-(5-phospho-D-ribosyl)imidazole-4-carboxamide. It functions in the pathway purine metabolism; IMP biosynthesis via de novo pathway; 5-formamido-1-(5-phospho-D-ribosyl)imidazole-4-carboxamide from 5-amino-1-(5-phospho-D-ribosyl)imidazole-4-carboxamide (10-formyl THF route): step 1/1. It participates in purine metabolism; IMP biosynthesis via de novo pathway; IMP from 5-formamido-1-(5-phospho-D-ribosyl)imidazole-4-carboxamide: step 1/1. This Gloeothece citriformis (strain PCC 7424) (Cyanothece sp. (strain PCC 7424)) protein is Bifunctional purine biosynthesis protein PurH.